The chain runs to 282 residues: Sulfur carrier protein FdhD (282 aa).

Residue Cys-115 is the Cysteine persulfide intermediate of the active site.

This sequence belongs to the FdhD family.

It is found in the cytoplasm. Its function is as follows. Required for formate dehydrogenase (FDH) activity. Acts as a sulfur carrier protein that transfers sulfur from IscS to the molybdenum cofactor prior to its insertion into FDH. The sequence is that of Sulfur carrier protein FdhD from Streptomyces coelicolor (strain ATCC BAA-471 / A3(2) / M145).